The primary structure comprises 630 residues: DNA topoisomerase 4 subunit B (630 aa).

ATP-binding positions include tyrosine 5, asparagine 42, aspartate 69, 110 to 116 (GLHGVGI), and lysine 334. A Toprim domain is found at 412–525 (TELFLVEGDS…NGHVYVALPP (114 aa)). Mg(2+)-binding residues include glutamate 418, aspartate 490, and aspartate 492.

The protein belongs to the type II topoisomerase family. ParE type 1 subfamily. In terms of assembly, heterotetramer composed of ParC and ParE. Mg(2+) serves as cofactor. The cofactor is Mn(2+). Requires Ca(2+) as cofactor.

It carries out the reaction ATP-dependent breakage, passage and rejoining of double-stranded DNA.. Topoisomerase IV is essential for chromosome segregation. It relaxes supercoiled DNA. Performs the decatenation events required during the replication of a circular DNA molecule. The polypeptide is DNA topoisomerase 4 subunit B (Salmonella typhi).